Reading from the N-terminus, the 252-residue chain is PHD finger protein ALFIN-LIKE 7 (252 aa).

Residues 141–193 are disordered; that stretch reads AKQSKDQSANHNSSRSKSSGGKPRHSESHTKASKMSPPPRKEDESGDEDEDDE. Residues 149-161 show a composition bias toward low complexity; that stretch reads ANHNSSRSKSSGG. Ser176 is modified (phosphoserine). A compositionally biased stretch (acidic residues) spans 184–193; the sequence is ESGDEDEDDE. Residues 195-247 form a PHD-type zinc finger; the sequence is GAVCGACGDNYGGDEFWICCDACEKWFHGKCVKITPAKAEHIKHYKCPSCTTS.

It belongs to the Alfin family. As to quaternary structure, interacts with H3K4me3 and to a lesser extent with H3K4me2. Ubiquitously expressed.

It localises to the nucleus. Its function is as follows. Histone-binding component that specifically recognizes H3 tails trimethylated on 'Lys-4' (H3K4me3), which mark transcription start sites of virtually all active genes. The polypeptide is PHD finger protein ALFIN-LIKE 7 (AL7) (Arabidopsis thaliana (Mouse-ear cress)).